The primary structure comprises 215 residues: S-crystallin 2 (215 aa).

In terms of domain architecture, GST N-terminal spans 2-80 (PSYTLHYFNH…YLAREFGFHG (79 aa)). The GST C-terminal domain maps to 82-215 (NNLDMARVDF…YLKSRSSTDF (134 aa)).

It belongs to the GST superfamily. Lens.

In terms of biological role, S-crystallins are structural components of squids and octopi eye lens. Contains relatively little GST activity (1/1000 of that of mammalian GST enzyme). The sequence is that of S-crystallin 2 (OCTS2) from Octopus vulgaris (Common octopus).